The primary structure comprises 875 residues: Ubiquitin-protein ligase E3A (875 aa).

The segment at C44–C83 adopts a C4-type; atypical zinc-finger fold. Over residues K175–E186 the composition is skewed to basic and acidic residues. The interval K175–K226 is disordered. Over residues R213–Q225 the composition is skewed to polar residues. S218 is modified (phosphoserine). Residues I401–R418 form an E6-binding region. An interaction with HCV core protein region spans residues R418–Q517. Position 659 is a phosphotyrosine; by ABL1 (Y659). In terms of domain architecture, HECT spans Y776–L875. C843 functions as the Glycyl thioester intermediate in the catalytic mechanism.

As to quaternary structure, the active form is probably a homotrimer. Binds UBQLN1 and UBQLN2. Interacts with the 26S proteasome. Interacts with BPY2. Interacts with HIF1AN, MAPK6 and NEURL4; interaction with MAPK6 may be mediated by NEURL4. Interacts with the proteasomal subunit PSMD4. Interacts with ESR1 and WBP2. Interacts with BMAL1. Interacts with ARC. In terms of assembly, (Microbial infection) Interacts with HCV core protein and targets it to degradation. (Microbial infection) Interacts with the E6 protein of the cancer-associated human papillomavirus types 16 and 18. The E6/E6-AP complex binds to and targets the p53/TP53 tumor-suppressor protein for ubiquitin-mediated proteolysis. Phosphorylation at Tyr-659 by ABL1 impairs E3 ligase activity and protects p53/TP53 from degradation in (HPV)-infected cells.

The protein localises to the cytoplasm. Its subcellular location is the nucleus. It carries out the reaction S-ubiquitinyl-[E2 ubiquitin-conjugating enzyme]-L-cysteine + [acceptor protein]-L-lysine = [E2 ubiquitin-conjugating enzyme]-L-cysteine + N(6)-ubiquitinyl-[acceptor protein]-L-lysine.. It participates in protein modification; protein ubiquitination. Functionally, E3 ubiquitin-protein ligase which accepts ubiquitin from an E2 ubiquitin-conjugating enzyme in the form of a thioester and transfers it to its substrates. Several substrates have been identified including the BMAL1, ARC, LAMTOR1, RAD23A and RAD23B, MCM7 (which is involved in DNA replication), annexin A1, the PML tumor suppressor, and the cell cycle regulator CDKN1B. Additionally, may function as a cellular quality control ubiquitin ligase by helping the degradation of the cytoplasmic misfolded proteins. Finally, UBE3A also promotes its own degradation in vivo. Plays an important role in the regulation of the circadian clock: involved in the ubiquitination of the core clock component BMAL1, leading to its proteasomal degradation. Acts as transcriptional coactivator of progesterone receptor PGR upon progesterone hormone activation. Acts as a regulator of synaptic development by mediating ubiquitination and degradation of ARC. Required for synaptic remodeling in neurons by mediating ubiquitination and degradation of LAMTOR1, thereby limiting mTORC1 signaling and activity-dependent synaptic remodeling. Synergizes with WBP2 in enhancing PGR activity. Its function is as follows. (Microbial infection) Catalyzes the high-risk human papilloma virus E6-mediated ubiquitination of p53/TP53, contributing to the neoplastic progression of cells infected by these viruses. In Homo sapiens (Human), this protein is Ubiquitin-protein ligase E3A.